Consider the following 177-residue polypeptide: ATP-dependent protease subunit HslV (177 aa).

Thr6 is an active-site residue. Ala162, Cys165, and Thr168 together coordinate Na(+).

Belongs to the peptidase T1B family. HslV subfamily. A double ring-shaped homohexamer of HslV is capped on each side by a ring-shaped HslU homohexamer. The assembly of the HslU/HslV complex is dependent on binding of ATP.

Its subcellular location is the cytoplasm. The enzyme catalyses ATP-dependent cleavage of peptide bonds with broad specificity.. With respect to regulation, allosterically activated by HslU binding. Its function is as follows. Protease subunit of a proteasome-like degradation complex believed to be a general protein degrading machinery. The sequence is that of ATP-dependent protease subunit HslV from Lawsonia intracellularis (strain PHE/MN1-00).